We begin with the raw amino-acid sequence, 379 residues long: UDP-4-amino-4-deoxy-L-arabinose--oxoglutarate aminotransferase (379 aa).

K182 carries the post-translational modification N6-(pyridoxal phosphate)lysine.

The protein belongs to the DegT/DnrJ/EryC1 family. ArnB subfamily. As to quaternary structure, homodimer. Pyridoxal 5'-phosphate is required as a cofactor.

It catalyses the reaction UDP-4-amino-4-deoxy-beta-L-arabinose + 2-oxoglutarate = UDP-beta-L-threo-pentopyranos-4-ulose + L-glutamate. It participates in nucleotide-sugar biosynthesis; UDP-4-deoxy-4-formamido-beta-L-arabinose biosynthesis; UDP-4-deoxy-4-formamido-beta-L-arabinose from UDP-alpha-D-glucuronate: step 2/3. It functions in the pathway bacterial outer membrane biogenesis; lipopolysaccharide biosynthesis. Catalyzes the conversion of UDP-4-keto-arabinose (UDP-Ara4O) to UDP-4-amino-4-deoxy-L-arabinose (UDP-L-Ara4N). The modified arabinose is attached to lipid A and is required for resistance to polymyxin and cationic antimicrobial peptides. The chain is UDP-4-amino-4-deoxy-L-arabinose--oxoglutarate aminotransferase from Sodalis glossinidius (strain morsitans).